Consider the following 140-residue polypeptide: Nucleoside diphosphate kinase (140 aa).

Residues K9, F57, R85, T91, R102, and N112 each contribute to the ATP site. Residue H115 is the Pros-phosphohistidine intermediate of the active site.

The protein belongs to the NDK family. In terms of assembly, homotetramer. Mg(2+) is required as a cofactor.

The protein resides in the cytoplasm. The enzyme catalyses a 2'-deoxyribonucleoside 5'-diphosphate + ATP = a 2'-deoxyribonucleoside 5'-triphosphate + ADP. It carries out the reaction a ribonucleoside 5'-diphosphate + ATP = a ribonucleoside 5'-triphosphate + ADP. Major role in the synthesis of nucleoside triphosphates other than ATP. The ATP gamma phosphate is transferred to the NDP beta phosphate via a ping-pong mechanism, using a phosphorylated active-site intermediate. The sequence is that of Nucleoside diphosphate kinase from Chlorobium luteolum (strain DSM 273 / BCRC 81028 / 2530) (Pelodictyon luteolum).